The following is a 344-amino-acid chain: Ion-translocating oxidoreductase complex subunit D (344 aa).

The next 4 membrane-spanning stretches (helical) occupy residues 23 to 43 (LVLG…GAGT), 44 to 64 (LLNL…MLAL), 80 to 100 (VTAL…LTLV), and 120 to 140 (PFNP…LEMT). Thr172 bears the FMN phosphoryl threonine mark. 5 consecutive transmembrane segments (helical) span residues 198–218 (LGGA…LFLL), 222–242 (LFTW…SLLF), 252–272 (GSPL…FIVT), 285–305 (LLFG…GGYP), and 306–326 (DGVA…DYYT).

This sequence belongs to the NqrB/RnfD family. The complex is composed of six subunits: RnfA, RnfB, RnfC, RnfD, RnfE and RnfG. FMN is required as a cofactor.

It localises to the cell inner membrane. In terms of biological role, part of a membrane-bound complex that couples electron transfer with translocation of ions across the membrane. In Pseudomonas paraeruginosa (strain DSM 24068 / PA7) (Pseudomonas aeruginosa (strain PA7)), this protein is Ion-translocating oxidoreductase complex subunit D.